Consider the following 377-residue polypeptide: Glutamate 5-kinase (377 aa).

Residue lysine 20 coordinates ATP. 3 residues coordinate substrate: serine 60, aspartate 147, and asparagine 159. 179–180 (TD) provides a ligand contact to ATP. Residues 285–363 (AGRLVIDDGA…DKVYQVLGEA (79 aa)) form the PUA domain.

This sequence belongs to the glutamate 5-kinase family.

The protein resides in the cytoplasm. It catalyses the reaction L-glutamate + ATP = L-glutamyl 5-phosphate + ADP. It functions in the pathway amino-acid biosynthesis; L-proline biosynthesis; L-glutamate 5-semialdehyde from L-glutamate: step 1/2. In terms of biological role, catalyzes the transfer of a phosphate group to glutamate to form L-glutamate 5-phosphate. In Acinetobacter baumannii (strain AB307-0294), this protein is Glutamate 5-kinase.